An 852-amino-acid polypeptide reads, in one-letter code: Protein SBE22 (852 aa).

Residues 1–158 form a disordered region; the sequence is MTSIQERGTS…ADKSKINTFP (158 aa). Positions 15 to 26 are enriched in basic and acidic residues; that stretch reads SLKEGEASDRSS. Over residues 43–61 the composition is skewed to polar residues; it reads PPSQTTLGRSRAGSNTMNK. A Phosphoserine modification is found at Ser72. The segment covering 74–96 has biased composition (polar residues); it reads NLLSNMNCSDNGNGGNMLNSFVN. Low complexity predominate over residues 124–139; that stretch reads TTEVFSSTSASSSLGD. The residue at position 201 (Ser201) is a Phosphoserine. A disordered region spans residues 206-248; sequence AAEKTMNKSRHSYQEQFSSKKSQSSLLNSKQRSRAKSQTCSST. Low complexity predominate over residues 224–235; it reads SKKSQSSLLNSK. Ser459, Ser517, and Ser520 each carry phosphoserine.

Belongs to the SBE2 family.

Its subcellular location is the cytoplasm. The protein resides in the golgi apparatus. In terms of biological role, with SBE2, is involved in cell wall integrity and polarity processes like bud growth, through the transport of CHS3 and UTR2 to sites of growth. This Saccharomyces cerevisiae (strain YJM789) (Baker's yeast) protein is Protein SBE22 (SBE22).